We begin with the raw amino-acid sequence, 358 residues long: Trace amine-associated receptor 7b (358 aa).

Over 1 to 47 the chain is Extracellular; the sequence is MATDDDRFPWDQDSILSRDLLSASSMQLCYEKLNRSCVRSPYSPGPR. N34 is a glycosylation site (N-linked (GlcNAc...) asparagine). 2 disulfides stabilise this stretch: C37-C201 and C120-C205. A helical transmembrane segment spans residues 48 to 68; that stretch reads LILYAVFGFGAVLAVCGNLLV. At 69–83 the chain is on the cytoplasmic side; that stretch reads MTSILHFRQLHSPAN. Residues 84–104 form a helical membrane-spanning segment; the sequence is FLVASLACADFLVGLTVMPFS. Over 105 to 125 the chain is Extracellular; it reads MVRSVEGCWYFGDIYCKFHSS. The chain crosses the membrane as a helical span at residues 126-147; that stretch reads FDGSFCYSSIFHLCFISADRYI. Over 148–166 the chain is Cytoplasmic; that stretch reads AVSDPLIYPTRFTASVSGK. Residues 167-187 form a helical membrane-spanning segment; the sequence is CITFSWLLSIIYSFSLFYTGV. Residues 188 to 211 are Extracellular-facing; the sequence is NEAGLEDLVSALTCVGGCQIAVNQ. N210 is a glycosylation site (N-linked (GlcNAc...) asparagine). Residues 212-232 traverse the membrane as a helical segment; sequence SWVFINFLLFLVPALVMMTVY. The Cytoplasmic segment spans residues 233-274; that stretch reads SKIFLIAKQQAQNIEKMGKQTARASESYKDRVAKRERKAAKT. The chain crosses the membrane as a helical span at residues 275 to 295; that stretch reads LGIAVAAFLLSWLPYFIDSII. Residues 296–309 lie on the Extracellular side of the membrane; it reads DAFLGFVTPTYVYE. The helical transmembrane segment at 310–332 threads the bilayer; the sequence is ILVWIGYYNSAMNPLIYAFFYPW. Residues 333 to 358 lie on the Cytoplasmic side of the membrane; the sequence is FRKAIKLIVTGKILRENSSATNLFPE.

This sequence belongs to the G-protein coupled receptor 1 family.

It localises to the cell membrane. Olfactory receptor specific for N,N-dimethylalkylamines trace amines, such as N,N-dimethylcyclohexylamine. Trace amine compounds are enriched in animal body fluids and act on trace amine-associated receptors (TAARs) to elicit both intraspecific and interspecific innate behaviors. Ligand-binding causes a conformation change that triggers signaling via G(s)-class of G alpha proteins (GNAL or GNAS). The chain is Trace amine-associated receptor 7b from Rattus norvegicus (Rat).